Consider the following 375-residue polypeptide: ATP-sensitive inward rectifier potassium channel 15 (375 aa).

Residues 1-60 (MDAIHLGMSSAPLVKHTNGVGLKAHRPRVMSKSGHSNVRIDKVDGIYLLYLQDLWTTVID) lie on the Cytoplasmic side of the membrane. A helical transmembrane segment spans residues 61 to 87 (MKWRYKLTLFAATFVMTWFLFGVVYYA). The Extracellular segment spans residues 88–113 (IAFIHGDLQLGESNSNHTPCIMKVDS). Positions 114–130 (LTGAFLFSLESQTTIGY) form an intramembrane region, helical; Pore-forming. Residues 127–132 (TIGYGV) carry the Selectivity filter motif. The Extracellular portion of the chain corresponds to 131–139 (GVRSITEEC). The chain crosses the membrane as a helical span at residues 140–165 (PHAIFLLVAQLVITTLIEIFITGTFL). Topologically, residues 166 to 375 (AKIARPKKRA…RSLLLQQSNV (210 aa)) are cytoplasmic.

It belongs to the inward rectifier-type potassium channel (TC 1.A.2.1) family. KCNJ15 subfamily. As to quaternary structure, can form heteromultimeric channels with Kir5.1/KCNJ16. Interacts with PATJ. As to expression, expressed in the proximal segment of the nephron.

It localises to the membrane. It is found in the cell membrane. It catalyses the reaction K(+)(in) = K(+)(out). With respect to regulation, channel activity is regulated by variations of cytosolic pH; reversibly inhibited by acidic pH values. Inhibited by Ba(2+) and Cs(+) in a voltage-dependent manner. Functionally, inward rectifier potassium channels are characterized by a greater tendency to allow potassium to flow into the cell rather than out of it. Their voltage dependence is regulated by the concentration of extracellular potassium; as external potassium is raised, the voltage range of the channel opening shifts to more positive voltages. The inward rectification is mainly due to the blockage of outward current by internal magnesium. This Mus musculus (Mouse) protein is ATP-sensitive inward rectifier potassium channel 15 (Kcnj15).